A 276-amino-acid chain; its full sequence is Flagellin FljJ (276 aa).

Residues 51–80 are disordered; sequence RPGAGDMSGLAREDEPGSGDIDRGRGPRAG. Positions 61–75 are enriched in basic and acidic residues; that stretch reads AREDEPGSGDIDRGR.

Belongs to the bacterial flagellin family. In terms of assembly, in C.crescentus, the flagellar filament is composed of multiple flagellins of 29 kDa; 27 kDa and 25 kDa.

The protein localises to the secreted. Its subcellular location is the bacterial flagellum. Its function is as follows. Flagellin is the subunit protein which polymerizes to form the filaments of bacterial flagella. In Caulobacter vibrioides (strain ATCC 19089 / CIP 103742 / CB 15) (Caulobacter crescentus), this protein is Flagellin FljJ (fljJ).